An 883-amino-acid polypeptide reads, in one-letter code: MQSYIAVNIDMASLKMLICVCVAILIPSTLSQDSHGIAGIIDPRDTASMDVGKISFSEAIGSGAPKEPQIRNRIFACSSPTGASVARLAQPRHCHRHADSTNMTEGIAVVFKQNIAPYVFNVTLYYKHITTVTTWALFSRPQITNEYVTRVPIDYHEIVRIDRSGECSSKATYHKNFMFFEAYDNDEAEKKLPLVPSLLRSTVSKAFHTTNFTKRHQTLGYRTSTSVDCVVEYLQARSVYPYDYFGMATGDTVEISPFYTKNTTGPRRHSVYRDYRFLEIANYQVRDLETGQIRPPKKRNFLTDEQFTIGWDAMEEKESVCTLSKWIEVPEAVRVSYKNSYHFSLKDMTMTFSSGKQPFNISRLHLAECVPTIASEAIDGIFARKYSSTHVRSGDIEYYLGSGGFLIAFQKLMSHGLAEMYLEEAQRQNHLPRGRERRQAAGRRTASLQSGPQGDRITTHSSATFAMLQFAYDKIQAHVNELIGNLLEAWCELQNRQLIVWHEMKKLNPNSLMTSLFGQPVSARLLGDIVAVSKCIEIPIENIRMQDSMRMPGDPTMCYTRPVLIFRYSSSPESQFSANSTENHNLDILGQLGEHNEILQGRNLIEPCMINHRRYFLLGENYLLYEDYTFVRQVNASEIEEVSIFINLNATILEDLDFVPVEVYTREELRDTGTLNYDDVVRYQNIYNKRFRDIDTVIRGDRGDAIFRAIADFFGNTLGEVGKALGTVVMTAAAAVISTVSGIASFLSNPFAALGIGIAVVVSIILGLLAFKYVMNLKSNPVQVLFPGAVPPAGTPPRPSRRYYKDEEEVEEDSDEDDRILATRVLKGLELLHKDEQKARRQKARFSAFAKNMRNLFRRKPRTKEDDYPLLEYPSWAEESEDE.

The N-terminal stretch at 1-31 is a signal peptide; that stretch reads MQSYIAVNIDMASLKMLICVCVAILIPSTLS. The Virion surface segment spans residues 32–750; that stretch reads QDSHGIAGII…SGIASFLSNP (719 aa). Disulfide bonds link C77/C535, C94/C491, C167/C229, C321/C369, and C558/C608. N-linked (GlcNAc...) asparagine; by host glycosylation is found at N102 and N121. Positions 134–140 are involved in fusion and/or binding to host membrane; it reads TWALFSR. The N-linked (GlcNAc...) asparagine; by host glycan is linked to N211. The involved in fusion and/or binding to host membrane stretch occupies residues 216-223; it reads HQTLGYRT. N-linked (GlcNAc...) asparagine; by host glycans are attached at residues N262 and N360. Residues 428 to 457 are disordered; the sequence is QNHLPRGRERRQAAGRRTASLQSGPQGDRI. N579, N635, and N649 each carry an N-linked (GlcNAc...) asparagine; by host glycan. Hydrophobic membrane proximal region regions lie at residues 694-748 and 724-744; these read IDTV…SFLS and ALGT…SGIA. A helical membrane pass occupies residues 751-771; sequence FAALGIGIAVVVSIILGLLAF. Topologically, residues 772–883 are intravirion; that stretch reads KYVMNLKSNP…PSWAEESEDE (112 aa). Residues 791-817 form a disordered region; the sequence is PPAGTPPRPSRRYYKDEEEVEEDSDED. Residues 806–817 are compositionally biased toward acidic residues; that stretch reads DEEEVEEDSDED. The short motif at 868-871 is the Internalization motif element; that stretch reads YPLL.

It belongs to the herpesviridae glycoprotein B family. As to quaternary structure, homotrimer; disulfide-linked. Binds to heparan sulfate proteoglycans. Interacts with gH/gL heterodimer. Post-translationally, a proteolytic cleavage by host furin generates two subunits that remain linked by disulfide bonds.

Its subcellular location is the virion membrane. The protein localises to the host cell membrane. The protein resides in the host endosome membrane. It is found in the host Golgi apparatus membrane. Functionally, envelope glycoprotein that forms spikes at the surface of virion envelope. Essential for the initial attachment to heparan sulfate moieties of the host cell surface proteoglycans. Involved in fusion of viral and cellular membranes leading to virus entry into the host cell. Following initial binding to its host receptors, membrane fusion is mediated by the fusion machinery composed at least of gB and the heterodimer gH/gL. May be involved in the fusion between the virion envelope and the outer nuclear membrane during virion egress. The protein is Envelope glycoprotein B of Gallus gallus (Chicken).